The primary structure comprises 212 residues: dITP/XTP pyrophosphatase (212 aa).

A substrate-binding site is contributed by 7 to 12; the sequence is SNNAKK. Positions 39 and 68 each coordinate Mg(2+). Aspartate 68 serves as the catalytic Proton acceptor. Substrate contacts are provided by residues serine 69, 165–168, lysine 188, and 193–194; these read FGYD and HR.

It belongs to the HAM1 NTPase family. Homodimer. Requires Mg(2+) as cofactor.

It carries out the reaction XTP + H2O = XMP + diphosphate + H(+). The catalysed reaction is dITP + H2O = dIMP + diphosphate + H(+). The enzyme catalyses ITP + H2O = IMP + diphosphate + H(+). Functionally, pyrophosphatase that catalyzes the hydrolysis of nucleoside triphosphates to their monophosphate derivatives, with a high preference for the non-canonical purine nucleotides XTP (xanthosine triphosphate), dITP (deoxyinosine triphosphate) and ITP. Seems to function as a house-cleaning enzyme that removes non-canonical purine nucleotides from the nucleotide pool, thus preventing their incorporation into DNA/RNA and avoiding chromosomal lesions. The sequence is that of dITP/XTP pyrophosphatase from Leptothrix cholodnii (strain ATCC 51168 / LMG 8142 / SP-6) (Leptothrix discophora (strain SP-6)).